The following is a 461-amino-acid chain: METLYNGTLTLGGKDQESTGFAWWAGNARLINLSGRLLGAHVAHAGLIVFWAGAMNLFEVAHFVPEKPMYEQGLILLPHLATLGYGVGPGGEIIDTFPYFVSGVLHLISSAVLGFGGVYHSLIGPETLEETFPFFGYVWKDKNKMTNILGAHLIILGIGAWLLVWKALYFGGVYDTWAPGGGDVRIITNPTTNPSVIFGYLLKSPFGGDGWIVSVDNMEDIIGGHIYIGTINILGGLWHVFTQPWAWTRRAFVWSGEAYLSYSLAAISVMGFVACCMSWFNNTAYPSEFYGPTGPEASQSQAFTFLVRDQRLGANVASAQGPTGLGKYLMRSPTGEIIFGGETMRFWDFRGPWLEPLRGPNGLDLNKLKNDIQPWQERRAAEYMTHAPLGSLNSVGGVATEINATNFVSPRSWLATSHFCLGFFFFVAHLWHAGRARAAAAGFEKGIDRFNEPTLSLRPLD.

The propeptide occupies 1 to 2; it reads ME. N-acetylthreonine is present on Thr3. A Phosphothreonine modification is found at Thr3. A run of 5 helical transmembrane segments spans residues 57 to 81, 122 to 143, 166 to 188, 243 to 263, and 279 to 300; these read LFEVAHFVPEKPMYEQGLILLPHLA, LIGPETLEETFPFFGYVWKDKN, KALYFGGVYDTWAPGGGDVRIIT, QPWAWTRRAFVWSGEAYLSYS, and WFNNTAYPSEFYGPTGPEASQS. Glu355 is a [CaMn4O5] cluster binding site. A helical transmembrane segment spans residues 435–459; sequence RARAAAAGFEKGIDRFNEPTLSLRP.

Belongs to the PsbB/PsbC family. PsbC subfamily. In terms of assembly, PSII is composed of 1 copy each of membrane proteins PsbA, PsbB, PsbC, PsbD, PsbE, PsbF, PsbH, PsbI, PsbJ, PsbK, PsbL, PsbM, PsbT, PsbX, PsbY, PsbZ, Psb30/Ycf12, at least 3 peripheral proteins of the oxygen-evolving complex and a large number of cofactors. It forms dimeric complexes. Binds multiple chlorophylls and provides some of the ligands for the Ca-4Mn-5O cluster of the oxygen-evolving complex. It may also provide a ligand for a Cl- that is required for oxygen evolution. PSII binds additional chlorophylls, carotenoids and specific lipids. is required as a cofactor.

The protein resides in the plastid. Its subcellular location is the chloroplast thylakoid membrane. In terms of biological role, one of the components of the core complex of photosystem II (PSII). It binds chlorophyll and helps catalyze the primary light-induced photochemical processes of PSII. PSII is a light-driven water:plastoquinone oxidoreductase, using light energy to abstract electrons from H(2)O, generating O(2) and a proton gradient subsequently used for ATP formation. This Oedogonium cardiacum (Filamentous green alga) protein is Photosystem II CP43 reaction center protein.